The primary structure comprises 283 residues: Bifunctional protein FolD 1 (283 aa).

NADP(+) is bound by residues 166-168 (GRS) and Ile232.

The protein belongs to the tetrahydrofolate dehydrogenase/cyclohydrolase family. Homodimer.

The enzyme catalyses (6R)-5,10-methylene-5,6,7,8-tetrahydrofolate + NADP(+) = (6R)-5,10-methenyltetrahydrofolate + NADPH. It catalyses the reaction (6R)-5,10-methenyltetrahydrofolate + H2O = (6R)-10-formyltetrahydrofolate + H(+). It functions in the pathway one-carbon metabolism; tetrahydrofolate interconversion. Functionally, catalyzes the oxidation of 5,10-methylenetetrahydrofolate to 5,10-methenyltetrahydrofolate and then the hydrolysis of 5,10-methenyltetrahydrofolate to 10-formyltetrahydrofolate. This chain is Bifunctional protein FolD 1, found in Lactobacillus johnsonii (strain CNCM I-12250 / La1 / NCC 533).